A 784-amino-acid chain; its full sequence is E3 UFM1-protein ligase 1 homolog (784 aa).

The interval 405–480 (SVSTQELEDD…RGGGAGNKKA (76 aa)) is disordered. A compositionally biased stretch (basic residues) spans 444–454 (KSTKKHQRGKA).

This sequence belongs to the UFL1 family.

E3 UFM1-protein ligase that mediates ufmylation of target proteins. This chain is E3 UFM1-protein ligase 1 homolog, found in Drosophila yakuba (Fruit fly).